Here is a 240-residue protein sequence, read N- to C-terminus: Methylthioribulose-1-phosphate dehydratase (240 aa).

A substrate-binding site is contributed by Cys103. His121 and His123 together coordinate Zn(2+). Glu144 functions as the Proton donor/acceptor in the catalytic mechanism. His200 is a Zn(2+) binding site.

Belongs to the aldolase class II family. MtnB subfamily. It depends on Zn(2+) as a cofactor.

The protein resides in the cytoplasm. It carries out the reaction 5-(methylsulfanyl)-D-ribulose 1-phosphate = 5-methylsulfanyl-2,3-dioxopentyl phosphate + H2O. The protein operates within amino-acid biosynthesis; L-methionine biosynthesis via salvage pathway; L-methionine from S-methyl-5-thio-alpha-D-ribose 1-phosphate: step 2/6. Its function is as follows. Catalyzes the dehydration of methylthioribulose-1-phosphate (MTRu-1-P) into 2,3-diketo-5-methylthiopentyl-1-phosphate (DK-MTP-1-P). The protein is Methylthioribulose-1-phosphate dehydratase of Komagataella phaffii (strain GS115 / ATCC 20864) (Yeast).